We begin with the raw amino-acid sequence, 362 residues long: 3-dehydroquinate synthase (362 aa).

NAD(+)-binding positions include 95 to 99 (GVVGD), 119 to 120 (TT), K132, and K141. Residues E174, H238, and H255 each coordinate Zn(2+).

This sequence belongs to the sugar phosphate cyclases superfamily. Dehydroquinate synthase family. Co(2+) is required as a cofactor. The cofactor is Zn(2+). Requires NAD(+) as cofactor.

The protein resides in the cytoplasm. The catalysed reaction is 7-phospho-2-dehydro-3-deoxy-D-arabino-heptonate = 3-dehydroquinate + phosphate. It participates in metabolic intermediate biosynthesis; chorismate biosynthesis; chorismate from D-erythrose 4-phosphate and phosphoenolpyruvate: step 2/7. Catalyzes the conversion of 3-deoxy-D-arabino-heptulosonate 7-phosphate (DAHP) to dehydroquinate (DHQ). The protein is 3-dehydroquinate synthase of Chlorobium luteolum (strain DSM 273 / BCRC 81028 / 2530) (Pelodictyon luteolum).